Reading from the N-terminus, the 445-residue chain is Endoplasmic reticulum membrane adapter protein XK (445 aa).

Residues 1–2 (MK) lie on the Cytoplasmic side of the membrane. The chain crosses the membrane as a helical span at residues 3 to 23 (FPASVLASVFLFVAETMAALY). Topologically, residues 24 to 37 (LSSTYRSAGDRMWQ) are extracellular. The chain crosses the membrane as a helical span at residues 38–58 (ALTLFFSLMPCTLVQLTLLFV). Residues 59-68 (HRDLSRDRPL) lie on the Cytoplasmic side of the membrane. The chain crosses the membrane as a helical span at residues 69 to 89 (VLLMHLLQLGPLYRCCEVFCI). At 90–140 (YCQSDQNEEPYVSITKKRQMPKDGLSEEVEKEVGQSEGKLFTHRSAFSRAS) the chain is on the extracellular side. S115 bears the Phosphoserine mark. The helical transmembrane segment at 141–161 (VIQAFLGSAPQLTLQLYITVL) threads the bilayer. Topologically, residues 162–170 (EQNITTGRF) are cytoplasmic. The helical transmembrane segment at 171 to 191 (IMVLSLLSIVYGALRCNILAI) threads the bilayer. Residues 192–207 (KIKYDEYEVKVKPLAY) are Extracellular-facing. Residues 208 to 228 (VCIFLWRSFEIATRVIVLVLF) form a helical membrane-spanning segment. At 229 to 234 (TSVLKI) the chain is on the cytoplasmic side. Residues 235–255 (WVVVVILVNFFSFFLYPWILF) traverse the membrane as a helical segment. Topologically, residues 256–276 (WNSGSPFPENIEKALTRVGTT) are extracellular. The chain crosses the membrane as a helical span at residues 277–297 (IVLGFLTLLYAGINMFCWSAV). The Cytoplasmic segment spans residues 298 to 316 (QLKIDNPELISKSQNWYRL). Residues 317–337 (LIYYMMRFVENSVLLLLWFFF) traverse the membrane as a helical segment. Over 338-348 (KTDIYMYVCAP) the chain is Extracellular. The helical transmembrane segment at 349–369 (LLILQLLIGYCTSILFMLVFY) threads the bilayer. Topologically, residues 370–445 (QFFHPCKKLF…IWTAVDLCST (76 aa)) are cytoplasmic.

Belongs to the XK family. In terms of assembly, heterodimer with Kell; disulfide-linked. Interacts with VPS13A.

It is found in the endoplasmic reticulum membrane. Functionally, recruits the lipid transfer protein VPS13A from lipid droplets to the endoplasmic reticulum (ER) membrane. The protein is Endoplasmic reticulum membrane adapter protein XK of Rattus norvegicus (Rat).